Here is a 118-residue protein sequence, read N- to C-terminus: NADH-quinone oxidoreductase subunit A 2 (118 aa).

The next 3 helical transmembrane spans lie at 5–25 (YLPI…SLVF), 60–80 (FYII…LYPW), and 87–107 (LGMF…VGYI).

It belongs to the complex I subunit 3 family. NDH-1 is composed of 14 different subunits. Subunits NuoA, H, J, K, L, M, N constitute the membrane sector of the complex.

It localises to the cell inner membrane. It carries out the reaction a quinone + NADH + 5 H(+)(in) = a quinol + NAD(+) + 4 H(+)(out). Its function is as follows. NDH-1 shuttles electrons from NADH, via FMN and iron-sulfur (Fe-S) centers, to quinones in the respiratory chain. The immediate electron acceptor for the enzyme in this species is believed to be ubiquinone. Couples the redox reaction to proton translocation (for every two electrons transferred, four hydrogen ions are translocated across the cytoplasmic membrane), and thus conserves the redox energy in a proton gradient. In Geobacter metallireducens (strain ATCC 53774 / DSM 7210 / GS-15), this protein is NADH-quinone oxidoreductase subunit A 2.